A 227-amino-acid chain; its full sequence is Guanylate kinase (227 aa).

The 179-residue stretch at 21–199 (GNLFMVVAPS…ALAELECIVA (179 aa)) folds into the Guanylate kinase-like domain. 28 to 35 (APSGAGKS) is a binding site for ATP.

Belongs to the guanylate kinase family.

The protein localises to the cytoplasm. It catalyses the reaction GMP + ATP = GDP + ADP. Essential for recycling GMP and indirectly, cGMP. The chain is Guanylate kinase from Burkholderia thailandensis (strain ATCC 700388 / DSM 13276 / CCUG 48851 / CIP 106301 / E264).